We begin with the raw amino-acid sequence, 349 residues long: Protein Wnt-7a (349 aa).

Residues 1–31 (MNRKARRCLGHLFLSLGMVYLRIGGFSSVVA) form the signal peptide. Cystine bridges form between Cys-73-Cys-84, Cys-123-Cys-131, Cys-133-Cys-152, Cys-200-Cys-214, and Cys-202-Cys-209. Asn-83 and Asn-127 each carry an N-linked (GlcNAc...) asparagine glycan. Residue Ser-206 is the site of O-palmitoleoyl serine; by PORCN attachment. The interval 238–266 (VEPVRASRNKRPTFLKIKKPLSYRKPMDT) is disordered linker. 6 cysteine pairs are disulfide-bonded: Cys-278-Cys-309, Cys-294-Cys-304, Cys-308-Cys-348, Cys-324-Cys-339, Cys-326-Cys-336, and Cys-331-Cys-332. Asn-295 carries N-linked (GlcNAc...) asparagine glycosylation.

Belongs to the Wnt family. In terms of assembly, forms a soluble 1:1 complex with AFM; this prevents oligomerization and is required for prolonged biological activity. The complex with AFM may represent the physiological form in body fluids. Interacts with PORCN. Interacts (via intrinsically disordered linker region) with RECK; interaction with RECK confers ligand selectivity for Wnt7 in brain endothelial cells and allows these cells to selectively respond to Wnt7. Interacts with FZD5. Palmitoleoylation is required for efficient binding to frizzled receptors. Depalmitoleoylation leads to Wnt signaling pathway inhibition.

The protein resides in the secreted. Its subcellular location is the extracellular space. It localises to the extracellular matrix. Ligand for members of the frizzled family of seven transmembrane receptors that functions in the canonical Wnt/beta-catenin signaling pathway. Plays an important role in embryonic development, including dorsal versus ventral patterning during limb development, skeleton development and urogenital tract development. Required for central nervous system (CNS) angiogenesis and blood-brain barrier regulation. Required for normal, sexually dimorphic development of the Mullerian ducts, and for normal fertility in both sexes. Required for normal neural stem cell proliferation in the hippocampus dentate gyrus. Required for normal progress through the cell cycle in neural progenitor cells, for self-renewal of neural stem cells, and for normal neuronal differentiation and maturation. Promotes formation of synapses via its interaction with FZD5. This chain is Protein Wnt-7a (WNT7A), found in Pongo pygmaeus (Bornean orangutan).